Consider the following 270-residue polypeptide: Transmembrane protein 176B (270 aa).

4 helical membrane-spanning segments follow: residues 65 to 85, 95 to 115, 127 to 147, and 209 to 229; these read LALG…GVCL, ASGC…GAIV, VSSL…VLCV, and LFLA…GVGL. Residues serine 236, serine 245, serine 254, and serine 258 each carry the phosphoserine modification. Residues 237–270 are disordered; sequence SQPLNEEGSEKRLLGENSVPPSPSREQTSTAIVL. Over residues 260–270 the composition is skewed to polar residues; the sequence is SREQTSTAIVL.

This sequence belongs to the TMEM176 family.

The protein resides in the nucleus membrane. In terms of biological role, may play a role in the process of maturation of dendritic cells. Required for the development of cerebellar granule cells. This Pongo abelii (Sumatran orangutan) protein is Transmembrane protein 176B (TMEM176B).